A 240-amino-acid polypeptide reads, in one-letter code: Large ribosomal subunit protein bL25 (240 aa).

The segment at 1–24 (MATVMEFKATARPKSGKGAARAER) is disordered.

The protein belongs to the bacterial ribosomal protein bL25 family. CTC subfamily. As to quaternary structure, part of the 50S ribosomal subunit; part of the 5S rRNA/L5/L18/L25 subcomplex. Contacts the 5S rRNA. Binds to the 5S rRNA independently of L5 and L18.

Functionally, this is one of the proteins that binds to the 5S RNA in the ribosome where it forms part of the central protuberance. The sequence is that of Large ribosomal subunit protein bL25 from Rhodopseudomonas palustris (strain HaA2).